The following is a 732-amino-acid chain: MAPPHQFQSKPSDVIRRRLSSAVSSKRPNIPGYTSLTPMWAGIAGAVVNNNTQFEVAISIHDSVYNTDFASSVVPYSPNEPEAQAGIIEKHVLETLRKFSTEHMCKFLGAGVTVILLREAPNLCTRLWLDMDIVPIVFNIKPFHTDSITRPNVRHRISSTTGSYVPSGAETPTVYYDPAQLQDPNKLSANVQTRLPIPRTVDEQADSAARKCIMYFGPGNNPRLQIGPRNQVAVDAGGKIHLIDDIDEYRKTVGKGTWNSVIKLADELREKKIKIGFFSSTPQGGGVALMRHAIIRFFTALDVDAAWYVPNPSPSVFRTTKNNHNILQGVADPSLRLTKEAADNFDSWILKNGLRWTAEGGPLAPGGVDIAFIDDPQMPGLIPLIKRIRPDLPIIYRSHIEIRSDLVHVKGSPQEEVWNYLWNNIQHSDLFISHPVNKFVPSDVPLEKLALLGAATDWLDGLSKHLDAWDSQYYMGEFRNLCVKEKMNELGWPAREYIVQIARFDPSKGIPNVIDSYARFRKLCVDKVMEDDIPQLLLCGHGAVDDPDASIIYDQVLQLIHAKYKEYAPDIVVMRCPPSDQLLNTLMANAKFALQLSTREGFEVKVSEALHAGKPVIACRTGGIPLQIEHGKSGYLCEPGDNAAVAQHMLDLYTDEDLYDTMSEYARTHVSDEVGTVGNAAAWMYLAVMYVSRGVKLRPHGAWINDLMRTEMGEPYRPGEPRLPRGELHVQG.

Residues 1 to 25 constitute a propeptide that is removed on maturation; the sequence is MAPPHQFQSKPSDVIRRRLSSAVSS.

This sequence belongs to the glycosyltransferase group 1 family. Glycosyltransferase 4 subfamily. In terms of assembly, homodimer.

It carries out the reaction alpha,alpha-trehalose + phosphate = alpha-D-glucose + alpha-D-glucose 1-phosphate. With respect to regulation, activity abolished by 1 mM Cu(2+). 0.1 mM Cu(2+) reduces trehalose phosphorolysis to 76% and trehalose synthesis to 48% of maximum activity. 1 mM Zn(2+) abolishes trehalose synthesis, and reduces trehalose phosphorolysis to 40% of maximum activity. Unaffected by EDTA. Its function is as follows. Reversibly catalyzes the synthesis and degradation of trehalose from glucose and alpha-D-glucose 1-phosphate. The equilibrium lies in the direction of trehalose synthesis. The polypeptide is Trehalose phosphorylase (Grifola frondosa (Maitake)).